The primary structure comprises 136 residues: DNA-directed RNA polymerase subunit omega (136 aa).

Residues 90 to 102 (SSPAAAAVAPQSS) are compositionally biased toward low complexity. Positions 90–136 (SSPAAAAVAPQSSSDDKDVQFDRMSEEDLLRGLENLAPPTETDDEGE) are disordered. The segment covering 103-120 (SDDKDVQFDRMSEEDLLR) has biased composition (basic and acidic residues).

It belongs to the RNA polymerase subunit omega family. The RNAP catalytic core consists of 2 alpha, 1 beta, 1 beta' and 1 omega subunit. When a sigma factor is associated with the core the holoenzyme is formed, which can initiate transcription.

It carries out the reaction RNA(n) + a ribonucleoside 5'-triphosphate = RNA(n+1) + diphosphate. Promotes RNA polymerase assembly. Latches the N- and C-terminal regions of the beta' subunit thereby facilitating its interaction with the beta and alpha subunits. This is DNA-directed RNA polymerase subunit omega from Methylorubrum populi (strain ATCC BAA-705 / NCIMB 13946 / BJ001) (Methylobacterium populi).